Reading from the N-terminus, the 570-residue chain is Formate--tetrahydrofolate ligase (570 aa).

65 to 72 (TPLGEGKT) lines the ATP pocket.

The protein belongs to the formate--tetrahydrofolate ligase family.

It carries out the reaction (6S)-5,6,7,8-tetrahydrofolate + formate + ATP = (6R)-10-formyltetrahydrofolate + ADP + phosphate. It functions in the pathway one-carbon metabolism; tetrahydrofolate interconversion. This Herpetosiphon aurantiacus (strain ATCC 23779 / DSM 785 / 114-95) protein is Formate--tetrahydrofolate ligase.